Reading from the N-terminus, the 422-residue chain is MSEILSRVWTVSHRVEIWLLILVAYLLQRNVNSGHLPTKAADPEAFMNVSEIIKHKGYPSEEYEVATEDGYILSVNRIPRGQTRLKKEGSRPVVLLQHGLLGDASNWISNLPNNSLGFILADAGFDVWMGNSRGNTWSRKHKTLSIDQDEFWAFSYDEMARFDLPAVINFILQKTGQKKVYYVGYSQGTTMGFIAFSTMPELAHKIKMYFALAPIATVKYARSPGTKFLLLPDMMIKVLFGRQEFLYQTRFFRQLFIYLCGQMILDQICSNIILLLGGFNTNNMNMSRANVYVAHTPAGTSVQNILHWSQAVNSGELRAFDWGSETKNQEKCNQPTPIRYKVRDMMVPTAMWTGGQDWLSNPDDVKTLLSEVTNLIYHKNIPEWAHVDFIWGLDAPQRVYNEIIHLMKQEPNLPQGTCRVKL.

The N-terminal stretch at 1 to 33 (MSEILSRVWTVSHRVEIWLLILVAYLLQRNVNS) is a signal peptide. A glycan (N-linked (GlcNAc...) asparagine) is linked at asparagine 48. The AB hydrolase-1 domain maps to 92–392 (PVVLLQHGLL…EWAHVDFIWG (301 aa)). Catalysis depends on serine 186, which acts as the Nucleophile. A disulfide bridge links cysteine 260 with cysteine 269. Catalysis depends on charge relay system residues aspartate 357 and histidine 386.

Belongs to the AB hydrolase superfamily. Lipase family.

It localises to the secreted. Functionally, plays a highly specific role in the last step of keratinocyte differentiation. May have an essential function in lipid metabolism of the most differentiated epidermal layers. The protein is Lipase member M (Lipm) of Mus musculus (Mouse).